Consider the following 259-residue polypeptide: Pyridoxine 5'-phosphate synthase (259 aa).

3-amino-2-oxopropyl phosphate is bound at residue asparagine 6. 8–9 (DH) contributes to the 1-deoxy-D-xylulose 5-phosphate binding site. Arginine 17 contributes to the 3-amino-2-oxopropyl phosphate binding site. The active-site Proton acceptor is the histidine 42. 1-deoxy-D-xylulose 5-phosphate contacts are provided by arginine 44 and histidine 49. The active-site Proton acceptor is the glutamate 69. A 1-deoxy-D-xylulose 5-phosphate-binding site is contributed by threonine 99. The active-site Proton donor is the histidine 212. Residues glycine 213 and 234–235 (GH) contribute to the 3-amino-2-oxopropyl phosphate site.

Belongs to the PNP synthase family. As to quaternary structure, homooctamer; tetramer of dimers.

The protein resides in the cytoplasm. It carries out the reaction 3-amino-2-oxopropyl phosphate + 1-deoxy-D-xylulose 5-phosphate = pyridoxine 5'-phosphate + phosphate + 2 H2O + H(+). It participates in cofactor biosynthesis; pyridoxine 5'-phosphate biosynthesis; pyridoxine 5'-phosphate from D-erythrose 4-phosphate: step 5/5. Functionally, catalyzes the complicated ring closure reaction between the two acyclic compounds 1-deoxy-D-xylulose-5-phosphate (DXP) and 3-amino-2-oxopropyl phosphate (1-amino-acetone-3-phosphate or AAP) to form pyridoxine 5'-phosphate (PNP) and inorganic phosphate. This Nautilia profundicola (strain ATCC BAA-1463 / DSM 18972 / AmH) protein is Pyridoxine 5'-phosphate synthase.